A 377-amino-acid polypeptide reads, in one-letter code: EPS I polysaccharide export outer membrane protein EpsA (377 aa).

Residues 1–23 (MFVSIPSIRKTVMSLCAVPLMAA) form the signal peptide. Residue cysteine 24 is the site of N-palmitoyl cysteine attachment. Cysteine 24 carries S-diacylglycerol cysteine lipidation.

This sequence belongs to the BexD/CtrA/VexA family.

The protein localises to the cell outer membrane. Probably involved in polymerization and/or export of exopolysaccharide EPS I which functions as a virulence factor. The sequence is that of EPS I polysaccharide export outer membrane protein EpsA (epsA) from Ralstonia solanacearum (Pseudomonas solanacearum).